The sequence spans 143 residues: Ribosome-binding factor A (143 aa).

The interval 123–143 (VRAQAAQAKPAGEANPYKERN) is disordered. Residues 124–136 (RAQAAQAKPAGEA) are compositionally biased toward low complexity.

This sequence belongs to the RbfA family. As to quaternary structure, monomer. Binds 30S ribosomal subunits, but not 50S ribosomal subunits or 70S ribosomes.

It localises to the cytoplasm. Functionally, one of several proteins that assist in the late maturation steps of the functional core of the 30S ribosomal subunit. Associates with free 30S ribosomal subunits (but not with 30S subunits that are part of 70S ribosomes or polysomes). Required for efficient processing of 16S rRNA. May interact with the 5'-terminal helix region of 16S rRNA. The chain is Ribosome-binding factor A from Corynebacterium urealyticum (strain ATCC 43042 / DSM 7109).